The sequence spans 526 residues: Probable di/tripeptide-binding protein 5 (526 aa).

The N-terminal stretch at 1–21 (MRLAAFSLFLAPLLLAQPAAA) is a signal peptide.

It belongs to the bacterial solute-binding protein 5 family. The complex is composed of two ATP-binding proteins (DppD and DppF), two transmembrane proteins (DppB and DppC) and a solute-binding protein (DppA5). Five orthologous SBPs (DppA1-A5) are present in P.aeruginosa, which increases the substrate specificity of the DppBCDF transporter.

Functionally, part of the ABC transporter DppABCDF involved in the uptake of various di/tripeptides. This Pseudomonas aeruginosa (strain UCBPP-PA14) protein is Probable di/tripeptide-binding protein 5.